The sequence spans 412 residues: Class E basic helix-loop-helix protein 40 (412 aa).

Positions Met-1–Gln-139 are essential for interaction with BMAL1, E-box binding and repressor activity against the CLOCK-BMAL1 heterodimer. Residues Thr-52–Leu-107 enclose the bHLH domain. A necessary for interaction with RXRA and repressor activity against RXRA region spans residues Leu-75–Leu-79. One can recognise an Orange domain in the interval Phe-142–Leu-175. Lys-159 participates in a covalent cross-link: Glycyl lysine isopeptide (Lys-Gly) (interchain with G-Cter in SUMO1, SUMO2 and SUMO3). Lys-167 is covalently cross-linked (Glycyl lysine isopeptide (Lys-Gly) (interchain with G-Cter in SUMO2)). The tract at residues Leu-182–Ser-303 is disordered. A Phosphoserine modification is found at Ser-235. Positions Glu-248–Met-271 are enriched in basic and acidic residues. Lys-279 participates in a covalent cross-link: Glycyl lysine isopeptide (Lys-Gly) (interchain with G-Cter in SUMO1); alternate. Residue Lys-279 forms a Glycyl lysine isopeptide (Lys-Gly) (interchain with G-Cter in SUMO1, SUMO2 and SUMO3); alternate linkage. Lys-279 is covalently cross-linked (Glycyl lysine isopeptide (Lys-Gly) (interchain with G-Cter in SUMO2); alternate). A Glycyl lysine isopeptide (Lys-Gly) (interchain with G-Cter in SUMO2) cross-link involves residue Lys-288. Ser-383 carries the post-translational modification Phosphoserine.

Homodimer. Heterodimer with BHLHE41/DEC2. Interacts with TCF3/E47. Interacts with ubiquitin-conjugating enzyme UBE2I/UBC9. Interacts with HDAC1, SUMO1, RXRA and BMAL1. In terms of processing, ubiquitinated; which may lead to proteasomal degradation. Sumoylation inhibits its ubiquitination and promotes its negative regulation of the CLOCK-BMAL1 heterodimer transcriptional activator activity. Expressed in cartilage, spleen, intestine, lung, and to a lesser extent in heart, brain, liver, muscle and stomach.

The protein localises to the cytoplasm. The protein resides in the nucleus. Its function is as follows. Transcriptional repressor involved in the regulation of the circadian rhythm by negatively regulating the activity of the clock genes and clock-controlled genes. Acts as the negative limb of a novel autoregulatory feedback loop (DEC loop) which differs from the one formed by the PER and CRY transcriptional repressors (PER/CRY loop). Both these loops are interlocked as it represses the expression of PER1/2 and in turn is repressed by PER1/2 and CRY1/2. Represses the activity of the circadian transcriptional activator: CLOCK-BMAL1|BMAL2 heterodimer by competing for the binding to E-box elements (5'-CACGTG-3') found within the promoters of its target genes. Negatively regulates its own expression and the expression of DBP and BHLHE41/DEC2. Acts as a corepressor of RXR and the RXR-LXR heterodimers and represses the ligand-induced RXRA and NR1H3/LXRA transactivation activity. May be involved in the regulation of chondrocyte differentiation via the cAMP pathway. Represses the transcription of NR0B2 and attentuates the transactivation of NR0B2 by the CLOCK-BMAL1 complex. Drives the circadian rhythm of blood pressure through transcriptional repression of ATP1B1 in the cardiovascular system. This Homo sapiens (Human) protein is Class E basic helix-loop-helix protein 40 (BHLHE40).